The following is a 336-amino-acid chain: MKTIFSGIQPSGTPTIGNYIGAMKQFIELQNEYNCYFCIVDEHAITVPQEPQKLRQQIRSLAALYLAVGLDPQKATIFIQSEVSAHAEAGWIIQCNTSIGELERMTQFKDKSQKNGRAGVSAGLLTYPPLMVGDIVLYNADLVPVGDDQKQHLELTRDFVERFNKRYAQKNQEILTIPEVKIAEQGSRIMSLQEPTKKMSKSDTNVKGFISMLDEPAVIRKKIRSAVTDSTGVIEYNKEEKPGITNLLNIYSAATGQTVEELVQAYEGKGYGDFKADLAEAVVALLEPIQVRYQELLASEELDMILDEGAENARLVANKTLQRMKNAVGLGRKVRR.

ATP-binding positions include 9 to 11 and 17 to 18; these read QPS and GN. Positions 10 to 18 match the 'HIGH' region motif; that stretch reads PSGTPTIGN. D134 serves as a coordination point for L-tryptophan. ATP is bound by residues 146–148, I189, and 198–202; these read GDD and KMSKS. The 'KMSKS' region signature appears at 198-202; the sequence is KMSKS.

Belongs to the class-I aminoacyl-tRNA synthetase family. Homodimer.

It localises to the cytoplasm. The catalysed reaction is tRNA(Trp) + L-tryptophan + ATP = L-tryptophyl-tRNA(Trp) + AMP + diphosphate + H(+). Functionally, catalyzes the attachment of tryptophan to tRNA(Trp). The chain is Tryptophan--tRNA ligase from Enterococcus faecalis (strain ATCC 700802 / V583).